The chain runs to 174 residues: Dual-action ribosomal maturation protein DarP (174 aa).

The protein belongs to the DarP family.

The protein localises to the cytoplasm. Its function is as follows. Member of a network of 50S ribosomal subunit biogenesis factors which assembles along the 30S-50S interface, preventing incorrect 23S rRNA structures from forming. Promotes peptidyl transferase center (PTC) maturation. This chain is Dual-action ribosomal maturation protein DarP, found in Vibrio campbellii (strain ATCC BAA-1116).